Consider the following 882-residue polypeptide: Translation initiation factor IF-2 (882 aa).

Positions 28–294 are disordered; it reads GIRKSADDSV…SSLQQGFQKP (267 aa). A compositionally biased stretch (polar residues) spans 67–81; that stretch reads STLNIPGTGGKSKSV. Positions 92–209 are enriched in basic and acidic residues; that stretch reads VKRDPQEAER…RMAEENKWTD (118 aa). The span at 244–258 shows a compositional bias: basic residues; sequence GRGRNAKAARPKKGN. Positions 259–272 are enriched in basic and acidic residues; sequence KHAESKADREEARA. The tr-type G domain occupies 381–550; it reads PRAPVVTIMG…LLQAEVLELK (170 aa). Residues 390–397 form a G1 region; the sequence is GHVDHGKT. Position 390-397 (390-397) interacts with GTP; the sequence is GHVDHGKT. The G2 stretch occupies residues 415–419; it reads GITQH. Residues 436–439 form a G3 region; that stretch reads DTPG. GTP-binding positions include 436–440 and 490–493; these read DTPGH and NKID. The interval 490-493 is G4; that stretch reads NKID. The tract at residues 526–528 is G5; sequence SAK. Lys-800 bears the N6-acetyllysine mark.

This sequence belongs to the TRAFAC class translation factor GTPase superfamily. Classic translation factor GTPase family. IF-2 subfamily.

It localises to the cytoplasm. Functionally, one of the essential components for the initiation of protein synthesis. Protects formylmethionyl-tRNA from spontaneous hydrolysis and promotes its binding to the 30S ribosomal subunits. Also involved in the hydrolysis of GTP during the formation of the 70S ribosomal complex. The polypeptide is Translation initiation factor IF-2 (Shigella flexneri serotype 5b (strain 8401)).